The primary structure comprises 205 residues: Glycerol-3-phosphate acyltransferase (205 aa).

The next 5 helical transmembrane spans lie at 3-23 (VFAL…SAIL), 53-73 (GVAA…VWLA), 80-100 (PFYL…PVFF), 112-132 (LGAI…TWLL), and 138-158 (GYSS…VWWF).

This sequence belongs to the PlsY family. As to quaternary structure, probably interacts with PlsX.

The protein resides in the cell inner membrane. The catalysed reaction is an acyl phosphate + sn-glycerol 3-phosphate = a 1-acyl-sn-glycero-3-phosphate + phosphate. Its pathway is lipid metabolism; phospholipid metabolism. In terms of biological role, catalyzes the transfer of an acyl group from acyl-phosphate (acyl-PO(4)) to glycerol-3-phosphate (G3P) to form lysophosphatidic acid (LPA). This enzyme utilizes acyl-phosphate as fatty acyl donor, but not acyl-CoA or acyl-ACP. This is Glycerol-3-phosphate acyltransferase from Erwinia tasmaniensis (strain DSM 17950 / CFBP 7177 / CIP 109463 / NCPPB 4357 / Et1/99).